A 495-amino-acid polypeptide reads, in one-letter code: Ribosomal protein uS12 methylthiotransferase RimO (495 aa).

Residues 5-121 enclose the MTTase N-terminal domain; the sequence is RTVALVTLGC…ISDRLQTILN (117 aa). The [4Fe-4S] cluster site is built by Cys-14, Cys-50, and Cys-84. The segment at 145 to 183 is disordered; it reads QSAGADVALPGHGAPEGLPEDLPEGLAPESGPRAPLRRR. One can recognise a Radical SAM core domain in the interval 184 to 415; that stretch reads LDGSPVASVK…RLAEELVAQR (232 aa). [4Fe-4S] cluster contacts are provided by Cys-198, Cys-202, and Cys-205. Residues 417–484 form the TRAM domain; the sequence is EERVGETVHV…GVDLVAEPLP (68 aa).

The protein belongs to the methylthiotransferase family. RimO subfamily. [4Fe-4S] cluster is required as a cofactor.

It localises to the cytoplasm. It carries out the reaction L-aspartate(89)-[ribosomal protein uS12]-hydrogen + (sulfur carrier)-SH + AH2 + 2 S-adenosyl-L-methionine = 3-methylsulfanyl-L-aspartate(89)-[ribosomal protein uS12]-hydrogen + (sulfur carrier)-H + 5'-deoxyadenosine + L-methionine + A + S-adenosyl-L-homocysteine + 2 H(+). In terms of biological role, catalyzes the methylthiolation of an aspartic acid residue of ribosomal protein uS12. In Streptomyces avermitilis (strain ATCC 31267 / DSM 46492 / JCM 5070 / NBRC 14893 / NCIMB 12804 / NRRL 8165 / MA-4680), this protein is Ribosomal protein uS12 methylthiotransferase RimO.